A 570-amino-acid chain; its full sequence is Sulfite reductase [NADPH] hemoprotein beta-component (570 aa).

Residues cysteine 434, cysteine 440, cysteine 479, and cysteine 483 each coordinate [4Fe-4S] cluster. Cysteine 483 contacts siroheme.

The protein belongs to the nitrite and sulfite reductase 4Fe-4S domain family. In terms of assembly, alpha(8)-beta(8). The alpha component is a flavoprotein, the beta component is a hemoprotein. Requires siroheme as cofactor. [4Fe-4S] cluster is required as a cofactor.

It catalyses the reaction hydrogen sulfide + 3 NADP(+) + 3 H2O = sulfite + 3 NADPH + 4 H(+). The protein operates within sulfur metabolism; hydrogen sulfide biosynthesis; hydrogen sulfide from sulfite (NADPH route): step 1/1. In terms of biological role, component of the sulfite reductase complex that catalyzes the 6-electron reduction of sulfite to sulfide. This is one of several activities required for the biosynthesis of L-cysteine from sulfate. This is Sulfite reductase [NADPH] hemoprotein beta-component from Salmonella arizonae (strain ATCC BAA-731 / CDC346-86 / RSK2980).